Here is a 223-residue protein sequence, read N- to C-terminus: Phosphoribosylformylglycinamidine synthase subunit PurQ (223 aa).

One can recognise a Glutamine amidotransferase type-1 domain in the interval Phe-3–Val-223. Catalysis depends on Cys-85, which acts as the Nucleophile. Active-site residues include His-193 and Glu-195.

Part of the FGAM synthase complex composed of 1 PurL, 1 PurQ and 2 PurS subunits.

The protein localises to the cytoplasm. The catalysed reaction is N(2)-formyl-N(1)-(5-phospho-beta-D-ribosyl)glycinamide + L-glutamine + ATP + H2O = 2-formamido-N(1)-(5-O-phospho-beta-D-ribosyl)acetamidine + L-glutamate + ADP + phosphate + H(+). It carries out the reaction L-glutamine + H2O = L-glutamate + NH4(+). It participates in purine metabolism; IMP biosynthesis via de novo pathway; 5-amino-1-(5-phospho-D-ribosyl)imidazole from N(2)-formyl-N(1)-(5-phospho-D-ribosyl)glycinamide: step 1/2. In terms of biological role, part of the phosphoribosylformylglycinamidine synthase complex involved in the purines biosynthetic pathway. Catalyzes the ATP-dependent conversion of formylglycinamide ribonucleotide (FGAR) and glutamine to yield formylglycinamidine ribonucleotide (FGAM) and glutamate. The FGAM synthase complex is composed of three subunits. PurQ produces an ammonia molecule by converting glutamine to glutamate. PurL transfers the ammonia molecule to FGAR to form FGAM in an ATP-dependent manner. PurS interacts with PurQ and PurL and is thought to assist in the transfer of the ammonia molecule from PurQ to PurL. The sequence is that of Phosphoribosylformylglycinamidine synthase subunit PurQ from Staphylococcus aureus (strain bovine RF122 / ET3-1).